Here is a 454-residue protein sequence, read N- to C-terminus: Elongation factor Tu, mitochondrial (454 aa).

The N-terminal 51 residues, 1-51, are a transit peptide targeting the mitochondrion; that stretch reads MASVVLRNPSSKRLVPFSSQIYSRCGASVTSSYSISHSIGGDDLSSSTFGT. The tr-type G domain maps to 65–261; sequence KPHVNVGTIG…AVDEYIPDPV (197 aa). A G1 region spans residues 74–81; that stretch reads GHVDHGKT. 74–81 contacts GTP; it reads GHVDHGKT. Thr82 is modified (phosphothreonine). The tract at residues 115-119 is G2; it reads GITIA. Positions 136 to 139 are G3; it reads DCPG. GTP-binding positions include 136 to 140 and 191 to 194; these read DCPGH and NKVD. The tract at residues 191 to 194 is G4; sequence NKVD. Positions 229–231 are G5; sequence SAL.

Belongs to the TRAFAC class translation factor GTPase superfamily. Classic translation factor GTPase family. EF-Tu/EF-1A subfamily.

It is found in the mitochondrion. In terms of biological role, this protein promotes the GTP-dependent binding of aminoacyl-tRNA to the A-site of ribosomes during protein biosynthesis. This Arabidopsis thaliana (Mouse-ear cress) protein is Elongation factor Tu, mitochondrial (TUFA).